A 576-amino-acid chain; its full sequence is Plant intracellular Ras-group-related LRR protein 4 (576 aa).

Residues 130 to 151 are compositionally biased toward low complexity; the sequence is AAPAAATTTTSTAAAGSSSSSA. The disordered stretch occupies residues 130–181; it reads AAPAAATTTTSTAAAGSSSSSAVGNAERHASSGTNGFTASRVAGTSTSTGRV. Polar residues predominate over residues 160–180; that stretch reads SSGTNGFTASRVAGTSTSTGR. LRR repeat units lie at residues 272-295, 296-318, 320-341, 342-364, 366-387, 389-410, 411-433, 434-456, 458-481, 482-503, and 505-527; these read LTGLVTLDISENRLLALPDAIGKL, FSLAKLDIHANRISQLPESIGDL, SLIYLNMRGNQLSSLPSSIGRL, LNLEELDVGSNGLSSLPDSIGSL, RLKKLIVETNDLDELPYTIGHC, SLVELQAGYNHLKALPEAVGKL, EPLEILSVRYNNLRSLPTTMASL, TKLKEVDVSFNELESIPENFCFA, SLIKLNVGNNFADLQYLPRSIGNL, EMLEELDMSNNQIRVLPDSFGN, and KHLRVLRAEENPLQVPPRDIALK. The short motif at 528–535 is the GVYW; degenerate element; the sequence is GAQAVVQY.

The protein belongs to the SHOC2 family. In terms of tissue distribution, widely expressed.

Functionally, leucine-rich repeat protein that likely mediates protein interactions, possibly in the context of signal transduction. This is Plant intracellular Ras-group-related LRR protein 4 (IRL4) from Oryza sativa subsp. japonica (Rice).